Consider the following 651-residue polypeptide: Carboxypeptidase S1 homolog A (651 aa).

The N-terminal stretch at 1–19 (MHLATGLAVALPFIGAASA) is a signal peptide. Cys-50 and Cys-121 form a disulfide bridge. Asn-77, Asn-125, Asn-128, Asn-161, Asn-184, and Asn-202 each carry an N-linked (GlcNAc...) asparagine glycan. Ser-238 is an active-site residue. N-linked (GlcNAc...) asparagine glycosylation is found at Asn-260, Asn-299, Asn-308, Asn-347, and Asn-410. 2 cysteine pairs are disulfide-bonded: Cys-325-Cys-361 and Cys-332-Cys-354. Residue Asp-458 is part of the active site. Residue Cys-461 participates in substrate binding. 2 N-linked (GlcNAc...) asparagine glycosylation sites follow: Asn-474 and Asn-504. The active site involves His-515. Glu-516 provides a ligand contact to substrate. Residues 604 to 630 (KSPAGKKQGPPPTSTSPPSPTSSSEGS) form a disordered region. Positions 612–623 (GPPPTSTSPPSP) are enriched in pro residues. Residue Ser-625 is the site of GPI-anchor amidated serine attachment. Residues 626–651 (SSEGSVKEFSVSVLGVSVLAAITFFL) constitute a propeptide, removed in mature form.

The protein belongs to the peptidase S10 family.

It is found in the cell membrane. It carries out the reaction Preferential release of a C-terminal arginine or lysine residue.. Extracellular serine carboxypeptidase that contributes to pathogenicity. The polypeptide is Carboxypeptidase S1 homolog A (SCPA) (Arthroderma otae (strain ATCC MYA-4605 / CBS 113480) (Microsporum canis)).